A 118-amino-acid polypeptide reads, in one-letter code: MEETLATPDATRRSLSPSCSATVKSRAAGFERRTKRRLSETNASVREDREEAEEEEDEVKEKIEALQRIIPGGAALGVDALFEETAGYILSLQCQIKTIKVLTSFLQRIDQEDMKFGG.

Positions 1 to 58 (MEETLATPDATRRSLSPSCSATVKSRAAGFERRTKRRLSETNASVREDREEAEEEEDE) are disordered. A compositionally biased stretch (polar residues) spans 13–23 (RSLSPSCSATV). Residues 43–92 (ASVREDREEAEEEEDEVKEKIEALQRIIPGGAALGVDALFEETAGYILSL) enclose the bHLH domain.

Belongs to the bHLH protein family. In terms of assembly, homodimer.

The protein localises to the nucleus. Atypical bHLH transcription factor that acts as a negative regulator of a variety of shade avoidance syndrome (SAS) responses, including seedling elongation and photosynthetic pigment accumulation. Acts as a direct transcriptional repressor of two auxin-responsive genes, SAUR15 and SAUR68. May function in integrating shade and hormone transcriptional networks in response to light and auxin changes. The polypeptide is Transcription factor PAR1 (PAR1) (Arabidopsis thaliana (Mouse-ear cress)).